A 556-amino-acid chain; its full sequence is Formate--tetrahydrofolate ligase (556 aa).

65 to 72 (TPAGEGKS) is a binding site for ATP.

The protein belongs to the formate--tetrahydrofolate ligase family.

The catalysed reaction is (6S)-5,6,7,8-tetrahydrofolate + formate + ATP = (6R)-10-formyltetrahydrofolate + ADP + phosphate. Its pathway is one-carbon metabolism; tetrahydrofolate interconversion. This is Formate--tetrahydrofolate ligase from Streptococcus pneumoniae (strain JJA).